Reading from the N-terminus, the 261-residue chain is UPF0328 protein ECU02_0020/ECU04_1700 (261 aa).

A disordered region spans residues 1–20 (MSITSIPQPHETNEQHHTEI). Basic and acidic residues predominate over residues 11–20 (ETNEQHHTEI).

The protein belongs to the UPF0328 family.

This Encephalitozoon cuniculi (strain GB-M1) (Microsporidian parasite) protein is UPF0328 protein ECU02_0020/ECU04_1700.